Consider the following 24-residue polypeptide: Osteocalcin (24 aa).

The 24-residue stretch at 1–24 folds into the Gla domain; the sequence is REVCELNPDCDELADHIGFQEAYR. Positions 2, 5, and 11 each coordinate Ca(2+). Glu-2 and Glu-5 each carry 4-carboxyglutamate. A disulfide bridge links Cys-4 with Cys-10.

Belongs to the osteocalcin/matrix Gla protein family. Post-translationally, gamma-carboxyglutamate residues are formed by vitamin K dependent carboxylation by GGCX. These residues are essential for the binding of calcium. Decarboxylation promotes the hormone activity.

The protein localises to the secreted. Its function is as follows. The carboxylated form is one of the main organic components of the bone matrix, which constitutes 1-2% of the total bone protein: it acts as a negative regulator of bone formation and is required to limit bone formation without impairing bone resorption or mineralization. The carboxylated form binds strongly to apatite and calcium. Functionally, the uncarboxylated form acts as a hormone secreted by osteoblasts, which regulates different cellular processes, such as energy metabolism, male fertility and brain development. Regulates of energy metabolism by acting as a hormone favoring pancreatic beta-cell proliferation, insulin secretion and sensitivity and energy expenditure. Uncarboxylated osteocalcin hormone also promotes testosterone production in the testes: acts as a ligand for G protein-coupled receptor GPRC6A at the surface of Leydig cells, initiating a signaling response that promotes the expression of enzymes required for testosterone synthesis in a CREB-dependent manner. Also acts as a regulator of brain development: osteocalcin hormone crosses the blood-brain barrier and acts as a ligand for GPR158 on neurons, initiating a signaling response that prevents neuronal apoptosis in the hippocampus, favors the synthesis of all monoamine neurotransmitters and inhibits that of gamma-aminobutyric acid (GABA). Osteocalcin also crosses the placenta during pregnancy and maternal osteocalcin is required for fetal brain development. This Homo sapiens neanderthalensis (Neanderthal) protein is Osteocalcin.